The following is a 136-amino-acid chain: Immunoglobulin J chain (136 aa).

Disulfide bonds link C12–C100, C71–C91, and C108–C133. Residue N48 is glycosylated (N-linked (GlcNAc...) (complex) asparagine).

In terms of assembly, part of the secretory IgA (sIgA) complex that consists of two, four or five IgA monomers, and two additional non-Ig polypeptides, namely the JCHAIN and the secretory component (the proteolytic product of PIGR). Part of the secretory IgM (sIgM) complex that consist of five IgM monomers, and two additional non-Ig polypeptides, namely the JCHAIN and the secretory component (the proteolytic product of PIGR). JCHAIN-containing IgM interacts (via CH4 domain) with FCRM (via Ig-like domain).

Its subcellular location is the secreted. Functionally, serves to link two monomer units of either IgM or IgA. In the case of IgM, the J chain-joined dimer is a nucleating unit for the IgM pentamer, and in the case of IgA it induces dimers and/or larger polymers. It also helps to bind these immunoglobulins to secretory component. The polypeptide is Immunoglobulin J chain (Oryctolagus cuniculus (Rabbit)).